Reading from the N-terminus, the 179-residue chain is Large ribosomal subunit protein uL5 (179 aa).

This sequence belongs to the universal ribosomal protein uL5 family. As to quaternary structure, part of the 50S ribosomal subunit; part of the 5S rRNA/L5/L18/L25 subcomplex. Contacts the 5S rRNA and the P site tRNA. Forms a bridge to the 30S subunit in the 70S ribosome.

Its function is as follows. This is one of the proteins that bind and probably mediate the attachment of the 5S RNA into the large ribosomal subunit, where it forms part of the central protuberance. In the 70S ribosome it contacts protein S13 of the 30S subunit (bridge B1b), connecting the 2 subunits; this bridge is implicated in subunit movement. Contacts the P site tRNA; the 5S rRNA and some of its associated proteins might help stabilize positioning of ribosome-bound tRNAs. In Burkholderia vietnamiensis (strain G4 / LMG 22486) (Burkholderia cepacia (strain R1808)), this protein is Large ribosomal subunit protein uL5.